The sequence spans 85 residues: Large ribosomal subunit protein bL27 (85 aa).

The protein belongs to the bacterial ribosomal protein bL27 family.

The sequence is that of Large ribosomal subunit protein bL27 from Azobacteroides pseudotrichonymphae genomovar. CFP2.